The primary structure comprises 117 residues: Large ribosomal subunit protein bL19 (117 aa).

Belongs to the bacterial ribosomal protein bL19 family.

In terms of biological role, this protein is located at the 30S-50S ribosomal subunit interface and may play a role in the structure and function of the aminoacyl-tRNA binding site. The polypeptide is Large ribosomal subunit protein bL19 (Vibrio vulnificus (strain CMCP6)).